A 202-amino-acid polypeptide reads, in one-letter code: Putative pituitary tumor-transforming gene 3 protein (202 aa).

The D-box signature appears at 61–64 (RKAL). The SH3-binding motif lies at 163 to 173 (PPSPLKMPSPP).

It belongs to the securin family.

Its subcellular location is the cytoplasm. The protein resides in the nucleus. This chain is Putative pituitary tumor-transforming gene 3 protein (PTTG3), found in Pan troglodytes (Chimpanzee).